The primary structure comprises 316 residues: Petrobactin import system permease protein YclN (316 aa).

8 consecutive transmembrane segments (helical) span residues 5 to 25, 49 to 69, 94 to 114, 133 to 153, 181 to 201, 224 to 244, 268 to 288, and 290 to 310; these read YLFILLIILAVTSVFIGVEDL, LISIVIAGLSMSICGLIMQQI, LLLFTSASPLIKMLVAFVFAL, IFIPLVGLMLGNIVSSIATFI, LLYLSIPLVIIAYVYADKFTL, LIIVSLITSLVILTVGMLPFL, VLLGAVFVLFCDILGRIIIFP, and EISIGLMVGIIGSGIFLFMLL.

This sequence belongs to the binding-protein-dependent transport system permease family. FecCD subfamily. In terms of assembly, the complex is composed of two ATP-binding proteins (YclP), two transmembrane proteins (YclN and YclO) and a solute-binding protein (YclQ).

It is found in the cell membrane. Functionally, part of the ABC transporter complex YclNOPQ involved in uptake of ferric-petrobactin. Petrobactin is a photoreactive 3,4-catecholate siderophore produced by many members of the B.cereus group, including B.anthracis. Probably responsible for the translocation of the substrate across the membrane. The protein is Petrobactin import system permease protein YclN (yclN) of Bacillus subtilis (strain 168).